The chain runs to 876 residues: Alanine--tRNA ligase (876 aa).

The Zn(2+) site is built by H560, H564, C662, and H666.

This sequence belongs to the class-II aminoacyl-tRNA synthetase family. Requires Zn(2+) as cofactor.

The protein localises to the cytoplasm. The catalysed reaction is tRNA(Ala) + L-alanine + ATP = L-alanyl-tRNA(Ala) + AMP + diphosphate. In terms of biological role, catalyzes the attachment of alanine to tRNA(Ala) in a two-step reaction: alanine is first activated by ATP to form Ala-AMP and then transferred to the acceptor end of tRNA(Ala). Also edits incorrectly charged Ser-tRNA(Ala) and Gly-tRNA(Ala) via its editing domain. This Synechococcus sp. (strain ATCC 27144 / PCC 6301 / SAUG 1402/1) (Anacystis nidulans) protein is Alanine--tRNA ligase.